Reading from the N-terminus, the 1011-residue chain is Protein translocase subunit SecA, chloroplastic (1011 aa).

Residues 1–17 (MATSSLCSSFTSQTCNP) show a composition bias toward polar residues. The interval 1–22 (MATSSLCSSFTSQTCNPHSRPH) is disordered. A chloroplast-targeting transit peptide spans 1–59 (MATSSLCSSFTSQTCNPHSRPHRKTLTLPGSVFLCRQFHLNSPSVSKTRRIRTRQSGPV). ATP is bound at residue 164–171 (MRTGEGKT). The disordered stretch occupies residues 976–1011 (QDKMENQKSGKRNARPPTDTNPDPVGTVEPSTSASS).

Belongs to the SecA family.

The protein localises to the plastid. Its subcellular location is the chloroplast stroma. The protein resides in the chloroplast thylakoid membrane. The catalysed reaction is ATP + H2O + chloroplast-proteinSide 1 = ADP + phosphate + chloroplast-proteinSide 2.. In terms of biological role, has a central role in coupling the hydrolysis of ATP to the transfer of proteins across the thylakoid membrane. Facilitates the transport of precursor proteins from the chloroplast stroma to thylakoid lumen. This Pisum sativum (Garden pea) protein is Protein translocase subunit SecA, chloroplastic.